Here is a 252-residue protein sequence, read N- to C-terminus: Small ribosomal subunit protein eS1B (252 aa).

An N-acetylalanine; partial modification is found at Ala-2. The residue at position 251 (Ser-251) is a Phosphoserine.

The protein belongs to the eukaryotic ribosomal protein eS1 family. Component of the small ribosomal subunit (SSU). Mature yeast ribosomes consist of a small (40S) and a large (60S) subunit. The 40S small subunit contains 1 molecule of ribosomal RNA (18S rRNA) and at least 33 different proteins. The large 60S subunit contains 3 rRNA molecules (25S, 5.8S and 5S rRNA) and at least 46 different proteins. eS1 interacts directly with uS11 and eS26, which form part of the mRNA exit tunnel.

Its subcellular location is the cytoplasm. Its function is as follows. Component of the ribosome, a large ribonucleoprotein complex responsible for the synthesis of proteins in the cell. The small ribosomal subunit (SSU) binds messenger RNAs (mRNAs) and translates the encoded message by selecting cognate aminoacyl-transfer RNA (tRNA) molecules. The large subunit (LSU) contains the ribosomal catalytic site termed the peptidyl transferase center (PTC), which catalyzes the formation of peptide bonds, thereby polymerizing the amino acids delivered by tRNAs into a polypeptide chain. The nascent polypeptides leave the ribosome through a tunnel in the LSU and interact with protein factors that function in enzymatic processing, targeting, and the membrane insertion of nascent chains at the exit of the ribosomal tunnel. This Schizosaccharomyces pombe (strain 972 / ATCC 24843) (Fission yeast) protein is Small ribosomal subunit protein eS1B (rps102).